The following is an 833-amino-acid chain: pre-rRNA 2'-O-ribose RNA methyltransferase (833 aa).

Residues G57, W59, D77, D93, and D118 each contribute to the S-adenosyl-L-methionine site. Catalysis depends on K158, which acts as the Proton acceptor. Disordered stretches follow at residues 323 to 349 (KLDNPDEEETEKPEEKKELTAEEMEEN), 363 to 453 (KKKR…DEYL), 475 to 640 (LDDV…SDED), 730 to 767 (LGKKMEKTRDKASSIVDNPEMSNREKSKAIEKLYSGTD), and 779 to 833 (IAKK…KNKK). Positions 336–386 (EEKKELTAEEMEENLQEEMKEYLALVEKKKRKEKKRQNELKRKHQRKIELT) form a coiled coil. Basic residues predominate over residues 363 to 381 (KKKRKEKKRQNELKRKHQR). The span at 382 to 396 (KIELTMHIPGDKIEE) shows a compositional bias: basic and acidic residues. Positions 423-441 (SSDEFDSDDSDDDDDDDNN) are enriched in acidic residues. A coiled-coil region spans residues 455 to 485 (QQLDEQYKLYQQRIRKKAAKLDDVKVKKDKI). Residues 475–486 (LDDVKVKKDKIG) are compositionally biased toward basic and acidic residues. 2 stretches are compositionally biased toward acidic residues: residues 490–503 (YNEDDEEFVEEQEE) and 542–556 (SESEPEQDGDDDQDD). Over residues 557–566 (ENNKPIDISK) the composition is skewed to basic and acidic residues. 2 stretches are compositionally biased toward acidic residues: residues 605 to 614 (DKDDQDDDDD) and 626 to 640 (PVQEEVEYESDSDED). Composition is skewed to basic and acidic residues over residues 732 to 741 (KKMEKTRDKA), 751 to 767 (SNREKSKAIEKLYSGTD), and 794 to 806 (KIVDKRMKKDLRA).

Belongs to the class I-like SAM-binding methyltransferase superfamily. RNA methyltransferase RlmE family. SPB1 subfamily.

The protein localises to the nucleus. It is found in the nucleolus. It catalyses the reaction a ribonucleotide in rRNA + S-adenosyl-L-methionine = a 2'-O-methylribonucleotide in rRNA + S-adenosyl-L-homocysteine + H(+). Its function is as follows. RNA 2'-O-methyltransferase involved in the maturation of rRNA and in the biogenesis of ribosomal subunits. The polypeptide is pre-rRNA 2'-O-ribose RNA methyltransferase (fsjC) (Dictyostelium discoideum (Social amoeba)).